Consider the following 181-residue polypeptide: Large ribosomal subunit protein uL5 (181 aa).

This sequence belongs to the universal ribosomal protein uL5 family. As to quaternary structure, part of the 50S ribosomal subunit; contacts the 5S rRNA and probably tRNA. Forms a bridge to the 30S subunit in the 70S ribosome.

Functionally, this is one of the proteins that bind and probably mediate the attachment of the 5S RNA into the large ribosomal subunit, where it forms part of the central protuberance. In the 70S ribosome it contacts protein S13 of the 30S subunit (bridge B1b), connecting the 2 subunits; this bridge is implicated in subunit movement. May contact the P site tRNA; the 5S rRNA and some of its associated proteins might help stabilize positioning of ribosome-bound tRNAs. In Methanococcus maripaludis (strain C7 / ATCC BAA-1331), this protein is Large ribosomal subunit protein uL5.